A 418-amino-acid chain; its full sequence is Zinc finger protein 566 (418 aa).

The region spanning 6 to 77 (VMFSDVSVDF…DRELTRGQWP (72 aa)) is the KRAB domain. The C2H2-type 1; degenerate zinc-finger motif lies at 169-193 (KFCASKEYRKTFRHGSQFATHEIIH). 7 C2H2-type zinc fingers span residues 199-221 (YECK…QKIH), 227-249 (FECK…HRIH), 255-277 (YECK…QRIH), 283-305 (YECK…QRIH), 311-333 (YECK…QRIH), 339-361 (YECK…QRIH), and 367-389 (YECK…HRIH). Glycyl lysine isopeptide (Lys-Gly) (interchain with G-Cter in SUMO2) cross-links involve residues lysine 314 and lysine 328.

This sequence belongs to the krueppel C2H2-type zinc-finger protein family.

The protein resides in the nucleus. In terms of biological role, may be involved in transcriptional regulation. This chain is Zinc finger protein 566 (ZNF566), found in Pan troglodytes (Chimpanzee).